A 514-amino-acid polypeptide reads, in one-letter code: Respiratory nitrate reductase 2 beta chain (514 aa).

3 consecutive 4Fe-4S ferredoxin-type domains span residues 7–35 (VGMV…GREG), 174–205 (TFMM…KREE), and 207–236 (GIVL…FNWK). [4Fe-4S] cluster contacts are provided by C16, C19, C22, C26, C183, C186, and C191. Residues C195, C216, and C222 each coordinate [3Fe-4S] cluster. The [4Fe-4S] cluster site is built by C226, C243, C246, C258, and C262.

In terms of assembly, dimer of heterotrimers each composed of an alpha, a beta and a gamma chain. Alpha and beta are catalytic chains; gamma chains are involved in binding the enzyme complex to the cytoplasmic membrane. [4Fe-4S] cluster is required as a cofactor. It depends on [3Fe-4S] cluster as a cofactor.

The protein localises to the cell membrane. It carries out the reaction nitrate + a quinol = a quinone + nitrite + H2O. This is a second nitrate reductase enzyme which can substitute for the NRA enzyme and allows E.coli to use nitrate as an electron acceptor during anaerobic growth. The beta chain is an electron transfer unit containing four cysteine clusters involved in the formation of iron-sulfur centers. Electrons are transferred from the gamma chain to the molybdenum cofactor of the alpha subunit. The protein is Respiratory nitrate reductase 2 beta chain (narY) of Escherichia coli (strain K12).